A 183-amino-acid chain; its full sequence is Disulfide bond formation protein B 2 (183 aa).

Topologically, residues 1 to 9 (MSLACSRSL) are cytoplasmic. Residues 10-26 (FFMAFTAGILALGASYY) form a helical membrane-spanning segment. At 27–44 (LEYAVGLVPCSLCLVQRL) the chain is on the periplasmic side. Cysteine 36 and cysteine 39 form a disulfide bridge. The chain crosses the membrane as a helical span at residues 45–61 (FMSVLTLCCGLAAVHGP). Residues 62–68 (QRVGLSL) lie on the Cytoplasmic side of the membrane. Residues 69–85 (YWMVTLLSSLGGTTAAW) traverse the membrane as a helical segment. Topologically, residues 86–142 (RQVLFQSDSLQELAHCAPNPEEMFSSLPWLCALMRMFNDTADCAELSWTLFDLSIPE) are periplasmic. Cysteine 101 and cysteine 128 form a disulfide bridge. Residues 143–161 (WSLLFFVGMSILAVYQLLR) form a helical membrane-spanning segment. Residues 162–183 (QVWMALQRPLSGQPSHPALVRD) lie on the Cytoplasmic side of the membrane.

It belongs to the DsbB family.

It is found in the cell inner membrane. Functionally, required for disulfide bond formation in some periplasmic proteins. Acts by oxidizing the DsbA protein. The polypeptide is Disulfide bond formation protein B 2 (Pseudomonas fluorescens (strain Pf0-1)).